The primary structure comprises 461 residues: Aspartic proteinase NANA, chloroplast (461 aa).

Asparagine 86 carries an N-linked (GlcNAc...) asparagine glycan. The Peptidase A1 domain occupies 106 to 456 (YFTEIRVGTP…DLMASTLSFA (351 aa)). Residue aspartate 124 is part of the active site. N-linked (GlcNAc...) asparagine glycosylation occurs at asparagine 274. Aspartate 338 is a catalytic residue. Asparagine 386 is a glycosylation site (N-linked (GlcNAc...) asparagine).

This sequence belongs to the peptidase A1 family.

It is found in the plastid. The protein localises to the chloroplast. Its activity is regulated as follows. Repressed by pepstatin A. Its function is as follows. Aspartic proteinase that can use azocasein as substrate and regulates endogenous sugar levels (e.g. sucrose, glucose and fructose) by modulating starch accumulation and remobilization. Influences general morphology and development. This Arabidopsis thaliana (Mouse-ear cress) protein is Aspartic proteinase NANA, chloroplast.